Consider the following 136-residue polypeptide: 5-hydroxyisourate hydrolase (136 aa).

The N-terminal stretch at 1 to 20 is a signal peptide; it reads MKRYILATVIASLVAAPAMA. Substrate-binding residues include histidine 31, arginine 69, and tyrosine 133.

The protein belongs to the transthyretin family. 5-hydroxyisourate hydrolase subfamily. Homotetramer.

It is found in the periplasm. It carries out the reaction 5-hydroxyisourate + H2O = 5-hydroxy-2-oxo-4-ureido-2,5-dihydro-1H-imidazole-5-carboxylate + H(+). Functionally, catalyzes the hydrolysis of 5-hydroxyisourate (HIU) to 2-oxo-4-hydroxy-4-carboxy-5-ureidoimidazoline (OHCU). The chain is 5-hydroxyisourate hydrolase (hiuH) from Salmonella typhimurium (strain LT2 / SGSC1412 / ATCC 700720).